A 679-amino-acid chain; its full sequence is Protein white (679 aa).

Residues 1–34 (MGQEDQEVLIRGGKATSTSAESLNNNNEQPYEQS) form a disordered region. Over residues 15-34 (ATSTSAESLNNNNEQPYEQS) the composition is skewed to polar residues. The ABC transporter domain maps to 84–332 (NRVKGVFCNE…FSYIGATCPT (249 aa)). 121–128 (GSSGAGKT) contributes to the ATP binding site. A run of 5 helical transmembrane segments spans residues 427-445 (LLQTTMVAVLIGLIFLGQQ), 457-477 (AIFLFLTNMTFQNSFATITVF), 507-525 (LPLFLVVPFLFTAIAYPLI), 534-555 (FFTALALVTLVANVSTSFGYLI), and 568-586 (VGPPVIIPFLLFGGFFLNS). Asn628 and Asn643 each carry an N-linked (GlcNAc...) asparagine glycan. Residues 651–670 (FDFIGLALLIVGFRISAYIA) form a helical membrane-spanning segment.

It belongs to the ABC transporter superfamily. ABCG family. Eye pigment precursor importer (TC 3.A.1.204) subfamily.

The protein resides in the membrane. In terms of biological role, may be part of a membrane-spanning permease system necessary for the transport of pigment precursors into pigment cells responsible for eye color. In Ceratitis capitata (Mediterranean fruit fly), this protein is Protein white (W).